The following is a 225-amino-acid chain: Ribosome maturation factor RimM (225 aa).

In terms of domain architecture, PRC barrel spans 144-225 (ADEFYWVDLI…RIVVDWEADY (82 aa)).

It belongs to the RimM family. Binds ribosomal protein uS19.

The protein localises to the cytoplasm. In terms of biological role, an accessory protein needed during the final step in the assembly of 30S ribosomal subunit, possibly for assembly of the head region. Essential for efficient processing of 16S rRNA. May be needed both before and after RbfA during the maturation of 16S rRNA. It has affinity for free ribosomal 30S subunits but not for 70S ribosomes. The sequence is that of Ribosome maturation factor RimM from Burkholderia orbicola (strain MC0-3).